Consider the following 50-residue polypeptide: Alpha-conotoxin CnIG (50 aa).

Positions 1–7 (LTTTVVS) are cleaved as a signal peptide. The segment covering 1 to 13 (LTTTVVSFPSDSA) has biased composition (polar residues). Residues 1 to 26 (LTTTVVSFPSDSASDGRDNEAKDERS) form a disordered region. Positions 8–35 (FPSDSASDGRDNEAKDERSDMYELKRNG) are excised as a propeptide. Residues 14–26 (SDGRDNEAKDERS) show a composition bias toward basic and acidic residues. 2 disulfides stabilise this stretch: Cys37-Cys42 and Cys38-Cys48. Cys48 is modified (cysteine amide).

This sequence belongs to the conotoxin A superfamily. Expressed by the venom duct.

It is found in the secreted. The protein is Alpha-conotoxin CnIG of Conus consors (Singed cone).